The chain runs to 427 residues: Phosphatidate cytidylyltransferase, mitochondrial (427 aa).

Polar residues predominate over residues 94 to 106 (YNRNGDGSTSTEN). Residues 94-113 (YNRNGDGSTSTENPSKKEEQ) are disordered.

It belongs to the TAM41 family. Mg(2+) is required as a cofactor.

The protein localises to the mitochondrion inner membrane. The catalysed reaction is a 1,2-diacyl-sn-glycero-3-phosphate + CTP + H(+) = a CDP-1,2-diacyl-sn-glycerol + diphosphate. It participates in phospholipid metabolism; CDP-diacylglycerol biosynthesis; CDP-diacylglycerol from sn-glycerol 3-phosphate: step 3/3. Catalyzes the formation of CDP-diacylglycerol (CDP-DAG) from phosphatidic acid (PA) in the mitochondrial inner membrane. Required for the biosynthesis of the dimeric phospholipid cardiolipin, which stabilizes supercomplexes of the mitochondrial respiratory chain in the mitochondrial inner membrane. The protein is Phosphatidate cytidylyltransferase, mitochondrial of Dictyostelium discoideum (Social amoeba).